The chain runs to 150 residues: Large ribosomal subunit protein bL9 (150 aa).

Belongs to the bacterial ribosomal protein bL9 family.

Binds to the 23S rRNA. This chain is Large ribosomal subunit protein bL9, found in Shewanella piezotolerans (strain WP3 / JCM 13877).